Here is a 273-residue protein sequence, read N- to C-terminus: Proteasome subunit beta type-5-B (273 aa).

The propeptide at 1-57 is removed in mature form; sequence MKLDTSGLETTMPVIGFGSNSEMLDGFSSAPSFDLPRTTDFDGFQKKAVEMVKPAKG. The active-site Nucleophile is T58.

The protein belongs to the peptidase T1B family. Component of the 20S core complex of the 26S proteasome. The 26S proteasome is composed of a core protease (CP), known as the 20S proteasome, capped at one or both ends by the 19S regulatory particle (RP/PA700). The 20S proteasome core is composed of 28 subunits that are arranged in four stacked rings, resulting in a barrel-shaped structure. The two end rings are each formed by seven alpha subunits, and the two central rings are each formed by seven beta subunits. The catalytic chamber with the active sites is on the inside of the barrel.

It is found in the cytoplasm. The protein localises to the nucleus. It catalyses the reaction Cleavage of peptide bonds with very broad specificity.. Its function is as follows. The proteasome is a multicatalytic proteinase complex which is characterized by its ability to cleave peptides with Arg, Phe, Tyr, Leu, and Glu adjacent to the leaving group at neutral or slightly basic pH. The proteasome has an ATP-dependent proteolytic activity. This Arabidopsis thaliana (Mouse-ear cress) protein is Proteasome subunit beta type-5-B (PBE2).